We begin with the raw amino-acid sequence, 201 residues long: HTH-type transcriptional regulator Hpr (201 aa).

Residues 13 to 157 (AMLFSQRIAQ…MMCIIRNIYG (145 aa)) form the HTH marR-type domain. A DNA-binding region (H-T-H motif) is located at residues 63–86 (ISEIAKFGVMHVSTAFNFSKKLEE).

As to quaternary structure, homodimer.

Functionally, negative regulator of protease production and sporulation. The sequence is that of HTH-type transcriptional regulator Hpr from Geobacillus sp. (strain WCH70).